The following is a 203-amino-acid chain: Dephospho-CoA kinase (203 aa).

A DPCK domain is found at 4-203 (VIGITGGIAT…EEGYIQSESE (200 aa)). Residue 12-17 (ATGKST) participates in ATP binding.

The protein belongs to the CoaE family.

The protein resides in the cytoplasm. The catalysed reaction is 3'-dephospho-CoA + ATP = ADP + CoA + H(+). Its pathway is cofactor biosynthesis; coenzyme A biosynthesis; CoA from (R)-pantothenate: step 5/5. Functionally, catalyzes the phosphorylation of the 3'-hydroxyl group of dephosphocoenzyme A to form coenzyme A. This chain is Dephospho-CoA kinase, found in Staphylococcus epidermidis (strain ATCC 35984 / DSM 28319 / BCRC 17069 / CCUG 31568 / BM 3577 / RP62A).